A 308-amino-acid chain; its full sequence is Probable manganese-dependent inorganic pyrophosphatase (308 aa).

Mn(2+)-binding residues include His9, Asp13, Asp15, Asp75, His97, and Asp149.

Belongs to the PPase class C family. It depends on Mn(2+) as a cofactor.

It is found in the cytoplasm. It carries out the reaction diphosphate + H2O = 2 phosphate + H(+). In Listeria monocytogenes serotype 4a (strain HCC23), this protein is Probable manganese-dependent inorganic pyrophosphatase.